Here is a 161-residue protein sequence, read N- to C-terminus: Kininogen-2 (161 aa).

The N-terminal stretch at methionine 1 to alanine 23 is a signal peptide. An intrachain disulfide couples cysteine 150 to cysteine 156. Valine 160 is subject to Valine amide.

Belongs to the bradykinin-related peptide family. As to expression, expressed by the skin glands.

The protein resides in the secreted. Its function is as follows. Inhibits ACE with a Ki of 1.6 uM, and targets B2 bradykinin receptor (BDKRB2). Provokes contraction of smooth muscle preparation (ileum). In vivo, induces an early hyperalgesic effects in living rats after intraplantar injection. In terms of biological role, inhibits the bradykinin-induced in vitro relaxation of rat arterial smooth muscle and constriction of intestinal smooth muscle. May target bradykinin receptors (BDKRB). The sequence is that of Kininogen-2 from Bombina orientalis (Oriental fire-bellied toad).